The sequence spans 1607 residues: Dicer-like protein 1 (1607 aa).

The segment at 1 to 74 (MNAEMREGSS…PDTKKWIVND (74 aa)) is disordered. The 183-residue stretch at 142–324 (LFERAKTQNT…IARSPELEGL (183 aa)) folds into the Helicase ATP-binding domain. 155–162 (LDTGSGKT) is a binding site for ATP. The DEAH box signature appears at 267-270 (DEAH). The Helicase C-terminal domain occupies 461 to 632 (KVVILLRILR…EALPADRKLT (172 aa)). One can recognise a Dicer dsRNA-binding fold domain in the interval 665–755 (SLICLAAFVA…RPTFTKQLPA (91 aa)). A PAZ domain is found at 905–1040 (GAVTFVRDNE…IVLEPLRISP (136 aa)). 2 RNase III domains span residues 1063-1219 (LVAL…LTAQ) and 1272-1447 (AARF…VDSR). Residues Glu1312, Asp1433, and Glu1436 each contribute to the Mg(2+) site. A DRBM domain is found at 1478 to 1556 (HPVTFLAGIM…AKKAIQVLEG (79 aa)). Zn(2+) is bound by residues Cys1493, His1527, Cys1568, and Cys1570.

Belongs to the helicase family. Dicer subfamily. Mg(2+) serves as cofactor. Requires Mn(2+) as cofactor.

In terms of biological role, dicer-like endonuclease involved in cleaving double-stranded RNA in the RNA interference (RNAi) pathway. Produces 21 to 25 bp dsRNAs (siRNAs) which target the selective destruction of homologous RNAs leading to sequence-specific suppression of gene expression, called post-transcriptional gene silencing (PTGS). Part of a broad host defense response against viral infection and transposons. The chain is Dicer-like protein 1 (DCL1) from Chaetomium globosum (strain ATCC 6205 / CBS 148.51 / DSM 1962 / NBRC 6347 / NRRL 1970) (Soil fungus).